The chain runs to 503 residues: Aspartyl/glutamyl-tRNA(Asn/Gln) amidotransferase subunit B (503 aa).

The protein belongs to the GatB/GatE family. GatB subfamily. As to quaternary structure, heterotrimer of A, B and C subunits.

It carries out the reaction L-glutamyl-tRNA(Gln) + L-glutamine + ATP + H2O = L-glutaminyl-tRNA(Gln) + L-glutamate + ADP + phosphate + H(+). The catalysed reaction is L-aspartyl-tRNA(Asn) + L-glutamine + ATP + H2O = L-asparaginyl-tRNA(Asn) + L-glutamate + ADP + phosphate + 2 H(+). In terms of biological role, allows the formation of correctly charged Asn-tRNA(Asn) or Gln-tRNA(Gln) through the transamidation of misacylated Asp-tRNA(Asn) or Glu-tRNA(Gln) in organisms which lack either or both of asparaginyl-tRNA or glutaminyl-tRNA synthetases. The reaction takes place in the presence of glutamine and ATP through an activated phospho-Asp-tRNA(Asn) or phospho-Glu-tRNA(Gln). The sequence is that of Aspartyl/glutamyl-tRNA(Asn/Gln) amidotransferase subunit B from Cereibacter sphaeroides (strain ATCC 17023 / DSM 158 / JCM 6121 / CCUG 31486 / LMG 2827 / NBRC 12203 / NCIMB 8253 / ATH 2.4.1.) (Rhodobacter sphaeroides).